The following is a 251-amino-acid chain: 3-deoxy-manno-octulosonate cytidylyltransferase (251 aa).

It belongs to the KdsB family.

Its subcellular location is the cytoplasm. It catalyses the reaction 3-deoxy-alpha-D-manno-oct-2-ulosonate + CTP = CMP-3-deoxy-beta-D-manno-octulosonate + diphosphate. The protein operates within nucleotide-sugar biosynthesis; CMP-3-deoxy-D-manno-octulosonate biosynthesis; CMP-3-deoxy-D-manno-octulosonate from 3-deoxy-D-manno-octulosonate and CTP: step 1/1. Its pathway is bacterial outer membrane biogenesis; lipopolysaccharide biosynthesis. Activates KDO (a required 8-carbon sugar) for incorporation into bacterial lipopolysaccharide in Gram-negative bacteria. This chain is 3-deoxy-manno-octulosonate cytidylyltransferase, found in Rhizobium johnstonii (strain DSM 114642 / LMG 32736 / 3841) (Rhizobium leguminosarum bv. viciae).